A 535-amino-acid chain; its full sequence is Thermosome subunit gamma (535 aa).

Belongs to the TCP-1 chaperonin family. In terms of assembly, forms a heterooligomeric complex of two stacked nine-membered rings; one of alpha and the other of beta subunits.

It localises to the cytoplasm. It carries out the reaction ATP + H2O = ADP + phosphate + H(+). Its function is as follows. Molecular chaperone; binds unfolded polypeptides in vitro, and has a weak ATPase activity. This chain is Thermosome subunit gamma (thsC), found in Saccharolobus shibatae (strain ATCC 51178 / DSM 5389 / JCM 8931 / NBRC 15437 / B12) (Sulfolobus shibatae).